Reading from the N-terminus, the 76-residue chain is DNA-directed RNA polymerase subunit epsilon (76 aa).

It belongs to the RNA polymerase subunit epsilon family. As to quaternary structure, RNAP is composed of a core of 2 alpha, a beta and a beta' subunit. The core is associated with a delta subunit, and at least one of epsilon or omega. When a sigma factor is associated with the core the holoenzyme is formed, which can initiate transcription.

It carries out the reaction RNA(n) + a ribonucleoside 5'-triphosphate = RNA(n+1) + diphosphate. Functionally, a non-essential component of RNA polymerase (RNAP). This chain is DNA-directed RNA polymerase subunit epsilon, found in Streptococcus agalactiae serotype Ia (strain ATCC 27591 / A909 / CDC SS700).